The following is a 417-amino-acid chain: Tyrosine--tRNA ligase (417 aa).

Residue tyrosine 39 coordinates L-tyrosine. Positions 44–53 (CTARSLHIGN) match the 'HIGH' region motif. Residues tyrosine 176 and glutamine 180 each coordinate L-tyrosine. The short motif at 236–240 (KMGKT) is the 'KMSKS' region element. An ATP-binding site is contributed by lysine 239. The S4 RNA-binding domain maps to 350 to 417 (FGVLNAFVKA…KKKHILIKPA (68 aa)).

The protein belongs to the class-I aminoacyl-tRNA synthetase family. TyrS type 1 subfamily. In terms of assembly, homodimer.

It is found in the cytoplasm. It carries out the reaction tRNA(Tyr) + L-tyrosine + ATP = L-tyrosyl-tRNA(Tyr) + AMP + diphosphate + H(+). Catalyzes the attachment of tyrosine to tRNA(Tyr) in a two-step reaction: tyrosine is first activated by ATP to form Tyr-AMP and then transferred to the acceptor end of tRNA(Tyr). This chain is Tyrosine--tRNA ligase, found in Bradyrhizobium diazoefficiens (strain JCM 10833 / BCRC 13528 / IAM 13628 / NBRC 14792 / USDA 110).